Reading from the N-terminus, the 27-residue chain is Caerulein precursor fragment R2 (27 aa).

Expressed by the skin glands.

Its subcellular location is the secreted. In terms of biological role, antimicrobial peptide. This is Caerulein precursor fragment R2 from Xenopus ruwenzoriensis (Uganda clawed frog).